A 212-amino-acid polypeptide reads, in one-letter code: Peptide methionine sulfoxide reductase MsrA (212 aa).

Cys52 is an active-site residue.

It belongs to the MsrA Met sulfoxide reductase family.

It catalyses the reaction L-methionyl-[protein] + [thioredoxin]-disulfide + H2O = L-methionyl-(S)-S-oxide-[protein] + [thioredoxin]-dithiol. The catalysed reaction is [thioredoxin]-disulfide + L-methionine + H2O = L-methionine (S)-S-oxide + [thioredoxin]-dithiol. Its function is as follows. Has an important function as a repair enzyme for proteins that have been inactivated by oxidation. Catalyzes the reversible oxidation-reduction of methionine sulfoxide in proteins to methionine. This chain is Peptide methionine sulfoxide reductase MsrA, found in Yersinia pseudotuberculosis serotype O:1b (strain IP 31758).